A 101-amino-acid polypeptide reads, in one-letter code: Protein Tat (101 aa).

Residues 1–20 (MEPVDPNLEPWKHPGSQPTT) form a disordered region. An interaction with human CREBBP region spans residues 1–24 (MEPVDPNLEPWKHPGSQPTTACSN). The segment at 1 to 48 (MEPVDPNLEPWKHPGSQPTTACSNCYCKVCCWHCQLCFLKKGLGISYG) is transactivation. Positions 22, 25, and 27 each coordinate Zn(2+). The tract at residues 22–37 (CSNCYCKVCCWHCQLC) is cysteine-rich. Lys28 carries the post-translational modification N6-acetyllysine; by host PCAF. The Zn(2+) site is built by Cys30, His33, Cys34, and Cys37. The segment at 38-48 (FLKKGLGISYG) is core. Residues 48-101 (GKKKRKPRRGPPQGSKDHQTLIPKQPLPQSQRVSAGQEESKKKVESKAKTDRFA) are disordered. The Nuclear localization signal, RNA-binding (TAR), and protein transduction motif lies at 49-57 (KKKRKPRRG). Residues 49–86 (KKKRKPRRGPPQGSKDHQTLIPKQPLPQSQRVSAGQEE) form an interaction with the host capping enzyme RNGTT region. Residues Lys50 and Lys51 each carry the N6-acetyllysine; by host EP300 and GCN5L2 modification. An Asymmetric dimethylarginine; by host PRMT6 modification is found at Arg52. Lys71 participates in a covalent cross-link: Glycyl lysine isopeptide (Lys-Gly) (interchain with G-Cter in ubiquitin). Residues 85–101 (EESKKKVESKAKTDRFA) are compositionally biased toward basic and acidic residues.

This sequence belongs to the lentiviruses Tat family. In terms of assembly, interacts with host CCNT1. Associates with the P-TEFb complex composed at least of Tat, P-TEFb (CDK9 and CCNT1), TAR RNA, RNA Pol II. Recruits the HATs CREBBP, TAF1/TFIID, EP300, PCAF and GCN5L2. Interacts with host KAT5/Tip60; this interaction targets the latter to degradation. Interacts with the host deacetylase SIRT1. Interacts with host capping enzyme RNGTT; this interaction stimulates RNGTT. Binds to host KDR, and to the host integrins ITGAV/ITGB3 and ITGA5/ITGB1. Interacts with host KPNB1/importin beta-1 without previous binding to KPNA1/importin alpha-1. Interacts with EIF2AK2. Interacts with host nucleosome assembly protein NAP1L1; this interaction may be required for the transport of Tat within the nucleus, since the two proteins interact at the nuclear rim. Interacts with host C1QBP/SF2P32; this interaction involves lysine-acetylated Tat. Interacts with the host chemokine receptors CCR2, CCR3 and CXCR4. Interacts with host DPP4/CD26; this interaction may trigger an anti-proliferative effect. Interacts with host LDLR. Interacts with the host extracellular matrix metalloproteinase MMP1. Interacts with host PRMT6; this interaction mediates Tat's methylation. Interacts with, and is ubiquitinated by MDM2/Hdm2. Interacts with host PSMC3 and HTATIP2. Interacts with STAB1; this interaction may overcome SATB1-mediated repression of IL2 and IL2RA (interleukin) in T cells by binding to the same domain than HDAC1. Interacts (when acetylated) with human CDK13, thereby increasing HIV-1 mRNA splicing and promoting the production of the doubly spliced HIV-1 protein Nef. Interacts with host TBP; this interaction modulates the activity of transcriptional pre-initiation complex. Interacts with host RELA. Interacts with host PLSCR1; this interaction negatively regulates Tat transactivation activity by altering its subcellular distribution. Post-translationally, asymmetrical arginine methylation by host PRMT6 seems to diminish the transactivation capacity of Tat and affects the interaction with host CCNT1. In terms of processing, acetylation by EP300, CREBBP, GCN5L2/GCN5 and PCAF regulates the transactivation activity of Tat. EP300-mediated acetylation of Lys-50 promotes dissociation of Tat from the TAR RNA through the competitive binding to PCAF's bromodomain. In addition, the non-acetylated Tat's N-terminus can also interact with PCAF. PCAF-mediated acetylation of Lys-28 enhances Tat's binding to CCNT1. Lys-50 is deacetylated by SIRT1. Polyubiquitination by host MDM2 does not target Tat to degradation, but activates its transactivation function and fosters interaction with CCNT1 and TAR RNA. Post-translationally, phosphorylated by EIF2AK2 on serine and threonine residues adjacent to the basic region important for TAR RNA binding and function. Phosphorylation of Tat by EIF2AK2 is dependent on the prior activation of EIF2AK2 by dsRNA.

Its subcellular location is the host nucleus. It localises to the host nucleolus. The protein resides in the host cytoplasm. The protein localises to the secreted. Functionally, transcriptional activator that increases RNA Pol II processivity, thereby increasing the level of full-length viral transcripts. Recognizes a hairpin structure at the 5'-LTR of the nascent viral mRNAs referred to as the transactivation responsive RNA element (TAR) and recruits the cyclin T1-CDK9 complex (P-TEFb complex) that will in turn hyperphosphorylate the RNA polymerase II to allow efficient elongation. The CDK9 component of P-TEFb and other Tat-activated kinases hyperphosphorylate the C-terminus of RNA Pol II that becomes stabilized and much more processive. Other factors such as HTATSF1/Tat-SF1, SUPT5H/SPT5, and HTATIP2 are also important for Tat's function. Besides its effect on RNA Pol II processivity, Tat induces chromatin remodeling of proviral genes by recruiting the histone acetyltransferases (HATs) CREBBP, EP300 and PCAF to the chromatin. This also contributes to the increase in proviral transcription rate, especially when the provirus integrates in transcriptionally silent region of the host genome. To ensure maximal activation of the LTR, Tat mediates nuclear translocation of NF-kappa-B by interacting with host RELA. Through its interaction with host TBP, Tat may also modulate transcription initiation. Tat can reactivate a latently infected cell by penetrating in it and transactivating its LTR promoter. In the cytoplasm, Tat is thought to act as a translational activator of HIV-1 mRNAs. Extracellular circulating Tat can be endocytosed by surrounding uninfected cells via the binding to several surface receptors such as CD26, CXCR4, heparan sulfate proteoglycans (HSPG) or LDLR. Neurons are rarely infected, but they internalize Tat via their LDLR. Through its interaction with nuclear HATs, Tat is potentially able to control the acetylation-dependent cellular gene expression. Modulates the expression of many cellular genes involved in cell survival, proliferation or in coding for cytokines or cytokine receptors. Tat plays a role in T-cell and neurons apoptosis. Tat induced neurotoxicity and apoptosis probably contribute to neuroAIDS. Circulating Tat also acts as a chemokine-like and/or growth factor-like molecule that binds to specific receptors on the surface of the cells, affecting many cellular pathways. In the vascular system, Tat binds to ITGAV/ITGB3 and ITGA5/ITGB1 integrins dimers at the surface of endothelial cells and competes with bFGF for heparin-binding sites, leading to an excess of soluble bFGF. This chain is Protein Tat, found in Human immunodeficiency virus type 1 group M subtype A (isolate U455) (HIV-1).